The primary structure comprises 71 residues: Potassium voltage-gated channel subfamily E member 2 (71 aa).

Residues 7 to 27 (VILYLMVMIGMFSFIIVAILV) traverse the membrane as a helical segment. Over 28-71 (STVKSKRREHSNDPYHQYIVEDWQEKYKSQILHFEEAKATIHEN) the chain is Cytoplasmic.

It belongs to the potassium channel KCNE family. Interacts with KCNB1. Associates with KCNH2/ERG1. May associate with KCNQ2 and KCNQ3. Associates with HCN1 and probably HCN2. Heteromultimer with KCNC2. Interacts with KCNC2. Interacts with KCNQ1; forms a heterooligomer complex that targets to the membrane raft and leading to currents with an apparently instantaneous activation, a rapid deactivation process and a linear current-voltage relationship and decreases the amplitude of the outward current. As to expression, detected in heart; expression is highest in the SA node and the right atrium, and barely detectable in the ventricle.

Its subcellular location is the cell membrane. The protein resides in the apical cell membrane. In terms of biological role, ancillary protein that functions as a regulatory subunit of the voltage-gated potassium (Kv) channel complex composed of pore-forming and potassium-conducting alpha subunits and of regulatory beta subunits. KCNE2 beta subunit modulates the gating kinetics and enhances stability of the channel complex. Alters the gating of the delayed rectifier Kv channel containing KCNB1 alpha subunit. Associates with KCNH2/HERG alpha subunit Kv channel to form the rapidly activating component of the delayed rectifying potassium current (IKr) in heart. May associate with KCNQ2 and/or KCNQ3 alpha subunits to modulate the native M-type current. May associate with HCN1 and HCN2 channel subunits to increase potassium current. Forms a heterooligomer complex with KCNQ1/KVLQT1 alpha subunits which leads to currents with an apparently instantaneous activation, a rapid deactivation process and a linear current-voltage relationship and decreases the amplitude of the outward current. KCNQ1-KCNE2 channel associates with Na(+)-coupled myo-inositol symporter in the apical membrane of choroid plexus epithelium and regulates the myo-inositol gradient between blood and cerebrospinal fluid with an impact on neuron excitability. The sequence is that of Potassium voltage-gated channel subfamily E member 2 (KCNE2) from Oryctolagus cuniculus (Rabbit).